The primary structure comprises 539 residues: BTB/POZ domain-containing protein 6 (539 aa).

A signal peptide spans 1–23 (MLLPLACLHGRVAQCLTSLLVLA). In terms of domain architecture, BTB spans 137–207 (ADVHFIVGAL…MYSDEIDLEA (71 aa)).

The protein localises to the cytoplasm. Functionally, adapter protein for the cul3 E3 ubiquitin-protein ligase complex. Involved in late neuronal development and muscle formation. This Mus musculus (Mouse) protein is BTB/POZ domain-containing protein 6 (Btbd6).